Reading from the N-terminus, the 234-residue chain is MTYKRVLLKLSGEALMGEKPYGIDPAIVQSIAEDVLKVVEKNVQLAIVVGGGNIFRGLKGSADGMDRATADYVGMLATVMNAISLQDGLERVGVATRVQTAIEMQEIAEPYIRRRAMRHLEKGRVVVFGGGCGNPFFTTDTTAALRAAEINAEVVMKATKVDGVYDCDPNQFKDAKKYSSLSYQRVLSDEIAVMDSTAIALCKDNNIPIMVFDIFKKGNISKAVAGEPIGSLIS.

An ATP-binding site is contributed by 9–12; that stretch reads KLSG. A UMP-binding site is contributed by G51. 2 residues coordinate ATP: G52 and R56. Residues D71 and 132 to 139 contribute to the UMP site; that span reads CGNPFFTT. The ATP site is built by T159, Y165, and D168.

This sequence belongs to the UMP kinase family. In terms of assembly, homohexamer.

It is found in the cytoplasm. It carries out the reaction UMP + ATP = UDP + ADP. The protein operates within pyrimidine metabolism; CTP biosynthesis via de novo pathway; UDP from UMP (UMPK route): step 1/1. With respect to regulation, inhibited by UTP. Catalyzes the reversible phosphorylation of UMP to UDP. The sequence is that of Uridylate kinase from Prochlorococcus marinus (strain MIT 9215).